The following is a 124-amino-acid chain: LOB domain-containing protein 9 (124 aa).

One can recognise an LOB domain in the interval 11–113 (APCALCTTKN…IYLNELKEKI (103 aa)).

Belongs to the LOB domain-containing protein family.

This is LOB domain-containing protein 9 (LBD9) from Arabidopsis thaliana (Mouse-ear cress).